The following is a 197-amino-acid chain: dITP/XTP pyrophosphatase (197 aa).

Substrate is bound at residue 8–13 (TGNVGK). 2 residues coordinate Mg(2+): E40 and D69. D69 (proton acceptor) is an active-site residue. Substrate is bound by residues S70, 154 to 157 (FGYD), K177, and 182 to 183 (HR).

It belongs to the HAM1 NTPase family. As to quaternary structure, homodimer. The cofactor is Mg(2+). Mn(2+) serves as cofactor. Requires Ni(2+) as cofactor.

The enzyme catalyses XTP + H2O = XMP + diphosphate + H(+). The catalysed reaction is dITP + H2O = dIMP + diphosphate + H(+). It catalyses the reaction ITP + H2O = IMP + diphosphate + H(+). In terms of biological role, pyrophosphatase that catalyzes the hydrolysis of nucleoside triphosphates to their monophosphate derivatives, with a high preference for the non-canonical purine nucleotides XTP (xanthosine triphosphate), dITP (deoxyinosine triphosphate) and ITP. Can also efficiently hydrolyze 2'-deoxy-N-6-hydroxylaminopurine triphosphate (dHAPTP). Seems to function as a house-cleaning enzyme that removes non-canonical purine nucleotides from the nucleotide pool, thus preventing their incorporation into DNA/RNA and avoiding chromosomal lesions. To a much lesser extent, is also able to hydrolyze GTP, dGTP and dUTP, but shows very low activity toward the canonical nucleotides dATP, dCTP and dTTP and toward 8-oxo-dGTP, purine deoxyribose triphosphate, 2-aminopurine deoxyribose triphosphate and 2,6-diaminopurine deoxyribose triphosphate. Genetic interactions among priB, dam, lexA, nagC, polA, rdgB, rdgB, rep and uup link the PriA-PriB replication restart pathway to DNA double-strand break repair. In Escherichia coli (strain K12), this protein is dITP/XTP pyrophosphatase.